The chain runs to 272 residues: Ribosomal RNA small subunit methyltransferase A (272 aa).

The S-adenosyl-L-methionine site is built by asparagine 18, leucine 20, glycine 45, glutamate 66, aspartate 91, and asparagine 113.

This sequence belongs to the class I-like SAM-binding methyltransferase superfamily. rRNA adenine N(6)-methyltransferase family. RsmA subfamily.

It is found in the cytoplasm. The catalysed reaction is adenosine(1518)/adenosine(1519) in 16S rRNA + 4 S-adenosyl-L-methionine = N(6)-dimethyladenosine(1518)/N(6)-dimethyladenosine(1519) in 16S rRNA + 4 S-adenosyl-L-homocysteine + 4 H(+). Functionally, specifically dimethylates two adjacent adenosines (A1518 and A1519) in the loop of a conserved hairpin near the 3'-end of 16S rRNA in the 30S particle. May play a critical role in biogenesis of 30S subunits. In Yersinia pseudotuberculosis serotype O:1b (strain IP 31758), this protein is Ribosomal RNA small subunit methyltransferase A.